Reading from the N-terminus, the 905-residue chain is V-type proton ATPase 116 kDa subunit a 1 (905 aa).

Residues methionine 1–glutamate 424 are Cytoplasmic-facing. The helical transmembrane segment at isoleucine 425 to phenylalanine 443 threads the bilayer. Topologically, residues glycine 444–aspartate 445 are lumenal. Residues methionine 446–lysine 462 traverse the membrane as a helical segment. Residues glutamate 463–glutamine 477 lie on the Cytoplasmic side of the membrane. The helical transmembrane segment at threonine 478 to serine 507 threads the bilayer. At isoleucine 508–serine 572 the chain is on the lumenal side. Residues methionine 573–leucine 592 form a helical membrane-spanning segment. Topologically, residues serine 593 to phenylalanine 610 are cytoplasmic. The chain crosses the membrane as a helical span at residues isoleucine 611–lysine 631. The Lumenal portion of the chain corresponds to tryptophan 632–isoleucine 699. A helical transmembrane segment spans residues leucine 700–leucine 719. The Cytoplasmic segment spans residues tyrosine 720 to threonine 788. Residues isoleucine 789–alanine 813 form a helical membrane-spanning segment. At glutamine 814–threonine 834 the chain is on the lumenal side. The helical transmembrane segment at glycine 835–glutamate 873 threads the bilayer. The Cytoplasmic segment spans residues phenylalanine 874–leucine 905.

Belongs to the V-ATPase 116 kDa subunit family. V-ATPase is a heteromultimeric enzyme made up of two complexes: the ATP-hydrolytic V1 complex and the proton translocation V0 complex. The V1 complex consists of three catalytic AB heterodimers that form a heterohexamer, three peripheral stalks each consisting of EG heterodimers, one central rotor including subunits D and F, and the regulatory subunits C and H. The proton translocation complex V0 consists of the proton transport subunit a, a ring of proteolipid subunits c9c'', rotary subunit d, subunits e and f, and the accessory subunits vah-19/Ac45 and vah-20/PRR. Interacts with V-type proton ATPase subunit C vha-11. As to expression, ubiquitous expression in embryos. Expressed in gonads, intestine, neurons in the head and motoneurons in the ventral cord of larvae and adults. Expressed in the vulvae and spermathecal uterine valves. Weakly expressed in the pharynx. Specifically expressed in the nervous system.

Its subcellular location is the membrane. In terms of biological role, subunit of the V0 complex of vacuolar(H+)-ATPase (V-ATPase), a multisubunit enzyme composed of a peripheral complex (V1) that hydrolyzes ATP and a membrane integral complex (V0) that translocates protons. V-ATPase is responsible for acidifying and maintaining the pH of intracellular compartments and in some cell types, is targeted to the plasma membrane, where it is responsible for acidifying the extracellular environment. Required for assembly and activity of the vacuolar ATPase. Regulates the size of gut granules during embryonic development. In neurons, required for necrotic cell death by promoting intracellular acidification. Required for cell death induced by hypoxia. Required for acidification of synaptic vesicles and the release of neurotransmitters from adult neurons. This Caenorhabditis elegans protein is V-type proton ATPase 116 kDa subunit a 1.